The primary structure comprises 387 residues: Patatin group A-3 (387 aa).

The N-terminal stretch at 1–23 (MATTKSFLILIVMILATTSSTFA) is a signal peptide. One can recognise a PNPLA domain in the interval 32–230 (LSIDGGGVKG…TVADPALLSV (199 aa)). The short motif at 36-41 (GGGVKG) is the GXGXXG element. Residues 75–79 (GTSTG) carry the GXSXG motif. Catalysis depends on serine 77, which acts as the Nucleophile. Residue asparagine 115 is glycosylated (N-linked (GlcNAc...) asparagine). The Proton acceptor role is filled by aspartate 216. A DGA/G motif is present at residues 216 to 218 (DGA). The stretch at 361 to 385 (ETYEEALKRFAKLLSDRKKLRANKA) forms a coiled coil.

This sequence belongs to the patatin family. As to expression, tuber and stolon.

It localises to the vacuole. In terms of biological role, probable lipolytic acyl hydrolase (LAH), an activity which is thought to be involved in the response of tubers to pathogens. This chain is Patatin group A-3, found in Solanum tuberosum (Potato).